A 179-amino-acid polypeptide reads, in one-letter code: Adenine phosphoribosyltransferase (179 aa).

It belongs to the purine/pyrimidine phosphoribosyltransferase family. Homodimer.

The protein localises to the cytoplasm. The enzyme catalyses AMP + diphosphate = 5-phospho-alpha-D-ribose 1-diphosphate + adenine. The protein operates within purine metabolism; AMP biosynthesis via salvage pathway; AMP from adenine: step 1/1. Catalyzes a salvage reaction resulting in the formation of AMP, that is energically less costly than de novo synthesis. The protein is Adenine phosphoribosyltransferase of Nitrobacter hamburgensis (strain DSM 10229 / NCIMB 13809 / X14).